Here is a 73-residue protein sequence, read N- to C-terminus: Protein kish (73 aa).

The first 21 residues, 1-21 (MTAIFNFESLLFVILLTICTC), serve as a signal peptide directing secretion. Topologically, residues 22 to 52 (TYLHRQFPALLEKRKEGVTMVFWKCARIGER) are lumenal. A helical transmembrane segment spans residues 53 to 73 (ASPYISLFCVFMALRFIFGSS).

This sequence belongs to the KISH family.

It is found in the golgi apparatus membrane. The protein resides in the endoplasmic reticulum membrane. In terms of biological role, involved in the early part of the secretory pathway. The polypeptide is Protein kish (ksh1) (Schizosaccharomyces pombe (strain 972 / ATCC 24843) (Fission yeast)).